A 435-amino-acid polypeptide reads, in one-letter code: Eukaryotic translation initiation factor 3 subunit E (435 aa).

One can recognise a PCI domain in the interval Phe219 to Leu392.

This sequence belongs to the eIF-3 subunit E family. In terms of assembly, component of the eukaryotic translation initiation factor 3 (eIF-3) complex.

It is found in the cytoplasm. Component of the eukaryotic translation initiation factor 3 (eIF-3) complex, which is involved in protein synthesis of a specialized repertoire of mRNAs and, together with other initiation factors, stimulates binding of mRNA and methionyl-tRNAi to the 40S ribosome. The eIF-3 complex specifically targets and initiates translation of a subset of mRNAs involved in cell proliferation. This is Eukaryotic translation initiation factor 3 subunit E (eIF3-S6) from Culex quinquefasciatus (Southern house mosquito).